Here is a 132-residue protein sequence, read N- to C-terminus: Small ribosomal subunit protein uS8 (132 aa).

Belongs to the universal ribosomal protein uS8 family. Part of the 30S ribosomal subunit. Contacts proteins S5 and S12.

One of the primary rRNA binding proteins, it binds directly to 16S rRNA central domain where it helps coordinate assembly of the platform of the 30S subunit. The protein is Small ribosomal subunit protein uS8 of Syntrophotalea carbinolica (strain DSM 2380 / NBRC 103641 / GraBd1) (Pelobacter carbinolicus).